A 331-amino-acid chain; its full sequence is MASALWTVLPSRMSLRSLKWSLLLLSLLSFFVMWYLSLPHYNVIERVNWMYFYEYEPIYRQDFHFTLREHSNCSHQNPFLVILVTSHPSDVKARQAIRVTWGEKKSWWGYEVLTFFLLGQEAEKEDKMLALSLEDEHLLYGDIIRQDFLDTYNNLTLKTIMAFRWVTEFCPNAKYVMKTDTDVFINTGNLVKYLLNLNHSEKFFTGYPLIDNYSYRGFYQKTHISYQEYPFKVFPPYCSGLGYIMSRDLVPRIYEMMGHVKPIKFEDVYVGICLNLLKVNIHIPEDTNLFFLYRIHLDVCQLRRVIAAHGFSSKEIITFWQVMLRNTTCHY.

Residues 1 to 20 (MASALWTVLPSRMSLRSLKW) are Cytoplasmic-facing. A helical; Signal-anchor for type II membrane protein membrane pass occupies residues 21-43 (SLLLLSLLSFFVMWYLSLPHYNV). The Lumenal segment spans residues 44-331 (IERVNWMYFY…VMLRNTTCHY (288 aa)). N-linked (GlcNAc...) asparagine glycans are attached at residues Asn-72, Asn-154, Asn-198, Asn-212, and Asn-326.

It belongs to the glycosyltransferase 31 family. The cofactor is Mg(2+). As to expression, higher expression in heart and brain, and to a lesser extent in lung, placenta, kidney and testis. Lower expression in liver, spleen and stomach. No expression in skeletal muscle.

The protein localises to the golgi apparatus membrane. It catalyses the reaction a globoside Gb3Cer (d18:1(4E)) + UDP-N-acetyl-alpha-D-galactosamine = a globoside Gb4Cer (d18:1(4E)) + UDP + H(+). The protein operates within protein modification; protein glycosylation. Its function is as follows. Transfers N-acetylgalactosamine onto globotriaosylceramide. Plays a critical role in preimplantation stage embryonic development. The protein is UDP-GalNAc:beta-1,3-N-acetylgalactosaminyltransferase 1 of Homo sapiens (Human).